We begin with the raw amino-acid sequence, 344 residues long: Glycerol-3-phosphate dehydrogenase [NAD(P)+] (344 aa).

Ser18, Tyr19, His39, and Lys113 together coordinate NADPH. Residues Lys113, Gly142, and Thr144 each contribute to the sn-glycerol 3-phosphate site. Position 146 (Ala146) interacts with NADPH. The sn-glycerol 3-phosphate site is built by Lys198, Asp251, Ser261, Arg262, and Asn263. The active-site Proton acceptor is the Lys198. Arg262 is an NADPH binding site. NADPH-binding residues include Ile286 and Glu288.

This sequence belongs to the NAD-dependent glycerol-3-phosphate dehydrogenase family.

It is found in the cytoplasm. It catalyses the reaction sn-glycerol 3-phosphate + NAD(+) = dihydroxyacetone phosphate + NADH + H(+). The catalysed reaction is sn-glycerol 3-phosphate + NADP(+) = dihydroxyacetone phosphate + NADPH + H(+). Its pathway is membrane lipid metabolism; glycerophospholipid metabolism. In terms of biological role, catalyzes the reduction of the glycolytic intermediate dihydroxyacetone phosphate (DHAP) to sn-glycerol 3-phosphate (G3P), the key precursor for phospholipid synthesis. This Blochmanniella pennsylvanica (strain BPEN) protein is Glycerol-3-phosphate dehydrogenase [NAD(P)+].